Consider the following 449-residue polypeptide: Biotin carboxylase (449 aa).

One can recognise a Biotin carboxylation domain in the interval M4 to G448. ATP is bound by residues K119, K162, G168–G169, E204–L207, H212, and H239. The ATP-grasp domain occupies I123–A320. K241 provides a ligand contact to hydrogencarbonate. Residues E279 and E291 each contribute to the ATP site. Mg(2+) contacts are provided by E279, E291, and N293. 3 residues coordinate Mn(2+): E279, E291, and N293. Hydrogencarbonate contacts are provided by R295, V298, and R341. R295 is an active-site residue. R341 is a biotin binding site.

In terms of assembly, acetyl-CoA carboxylase is a heterohexamer of biotin carboxyl carrier protein, biotin carboxylase and the two subunits of carboxyl transferase in a 2:2 complex. Requires Mg(2+) as cofactor. It depends on Mn(2+) as a cofactor.

The enzyme catalyses N(6)-biotinyl-L-lysyl-[protein] + hydrogencarbonate + ATP = N(6)-carboxybiotinyl-L-lysyl-[protein] + ADP + phosphate + H(+). The protein operates within lipid metabolism; malonyl-CoA biosynthesis; malonyl-CoA from acetyl-CoA: step 1/1. Functionally, this protein is a component of the acetyl coenzyme A carboxylase complex; first, biotin carboxylase catalyzes the carboxylation of the carrier protein and then the transcarboxylase transfers the carboxyl group to form malonyl-CoA. The sequence is that of Biotin carboxylase (accC) from Allochromatium vinosum (strain ATCC 17899 / DSM 180 / NBRC 103801 / NCIMB 10441 / D) (Chromatium vinosum).